Consider the following 691-residue polypeptide: Elongation factor G (691 aa).

Residues 8 to 282 (HMVRNIGIAA…AVVDYLPAPD (275 aa)) form the tr-type G domain. GTP contacts are provided by residues 17-24 (AHIDAGKT), 81-85 (DTPGH), and 135-138 (NKMD).

This sequence belongs to the TRAFAC class translation factor GTPase superfamily. Classic translation factor GTPase family. EF-G/EF-2 subfamily.

The protein localises to the cytoplasm. Functionally, catalyzes the GTP-dependent ribosomal translocation step during translation elongation. During this step, the ribosome changes from the pre-translocational (PRE) to the post-translocational (POST) state as the newly formed A-site-bound peptidyl-tRNA and P-site-bound deacylated tRNA move to the P and E sites, respectively. Catalyzes the coordinated movement of the two tRNA molecules, the mRNA and conformational changes in the ribosome. The chain is Elongation factor G from Campylobacter hominis (strain ATCC BAA-381 / DSM 21671 / CCUG 45161 / LMG 19568 / NCTC 13146 / CH001A).